The chain runs to 302 residues: MGNCCWTQCFGLLRKEAGRLQRVGGGGGSKYFRTCSRGEHLTIEFENLVESDEGESPGSSHRPLTEEEIVDLRERHYDSIAEKQKDLDKKIQKELALQEEKLRLEEEALYAAQREAARAAKQRKLLEQERQRIVQQYHPSNNGEYQSSGPEDDFESCLRNMKSQYEVFRSSRLSSDATVLTPNTESSCDLMTKTKSTSGNDDSTSLDLEWEDEEGMNRMLPMRERSKTEEDILRAALKYSNKKTGSNPTSASDDSNGLEWENDFVSAEMDDNGNSEYSGFVNPVLELSDSGIRHSDTDQQTR.

Serine 29 bears the Phosphoserine mark. The segment at 78-138 is interaction with AP1G1; it reads DSIAEKQKDL…ERQRIVQQYH (61 aa). Residues 80 to 138 adopt a coiled-coil conformation; it reads IAEKQKDLDKKIQKELALQEEKLRLEEEALYAAQREAARAAKQRKLLEQERQRIVQQYH. Residues 188-206 are compositionally biased toward polar residues; sequence CDLMTKTKSTSGNDDSTSL. The tract at residues 188-258 is disordered; sequence CDLMTKTKST…TSASDDSNGL (71 aa). The segment at 199–215 is sufficient for association with the Arp2/3 complex; that stretch reads GNDDSTSLDLEWEDEEG. Basic and acidic residues predominate over residues 221–233; that stretch reads PMRERSKTEEDIL. At serine 226 the chain carries Phosphoserine. Threonine 228 carries the post-translational modification Phosphothreonine. Residues 242–255 are compositionally biased toward polar residues; that stretch reads KKTGSNPTSASDDS.

As to quaternary structure, interacts (via coiled-coil domain) with AP1G1 (via GAE domain). Interacts with KIF5B. Associates with the Arp2/3 complex. Post-translationally, palmitoylated.

The protein resides in the golgi apparatus. It is found in the trans-Golgi network. Its subcellular location is the late endosome. The protein localises to the early endosome. In terms of biological role, necessary for adaptor protein complex 1 (AP-1)-dependent transport between the trans-Golgi network and endosomes. Regulates the membrane association of AP1G1/gamma1-adaptin, one of the subunits of the AP-1 adaptor complex. The direct interaction with AP1G1/gamma1-adaptin attenuates the release of the AP-1 complex from membranes. Regulates endosomal membrane traffic via association with AP-1 and KIF5B thus linking kinesin-based plus-end-directed microtubular transport to AP-1-dependent membrane traffic. May act as effector of AP-1 in calcium-induced endo-lysosome secretion. Inhibits Arp2/3 complex function; negatively regulates cell spreading, size and motility via intracellular sequestration of the Arp2/3 complex. In Homo sapiens (Human), this protein is AP-1 complex-associated regulatory protein (AP1AR).